A 485-amino-acid polypeptide reads, in one-letter code: Aspartyl/glutamyl-tRNA(Asn/Gln) amidotransferase subunit B (485 aa).

It belongs to the GatB/GatE family. GatB subfamily. In terms of assembly, heterotrimer of A, B and C subunits.

The enzyme catalyses L-glutamyl-tRNA(Gln) + L-glutamine + ATP + H2O = L-glutaminyl-tRNA(Gln) + L-glutamate + ADP + phosphate + H(+). The catalysed reaction is L-aspartyl-tRNA(Asn) + L-glutamine + ATP + H2O = L-asparaginyl-tRNA(Asn) + L-glutamate + ADP + phosphate + 2 H(+). Allows the formation of correctly charged Asn-tRNA(Asn) or Gln-tRNA(Gln) through the transamidation of misacylated Asp-tRNA(Asn) or Glu-tRNA(Gln) in organisms which lack either or both of asparaginyl-tRNA or glutaminyl-tRNA synthetases. The reaction takes place in the presence of glutamine and ATP through an activated phospho-Asp-tRNA(Asn) or phospho-Glu-tRNA(Gln). The protein is Aspartyl/glutamyl-tRNA(Asn/Gln) amidotransferase subunit B of Methylacidiphilum infernorum (isolate V4) (Methylokorus infernorum (strain V4)).